The following is a 173-amino-acid chain: Alpha-crystallin A chain (173 aa).

Met1 is modified (N-acetylmethionine). Positions 1-63 (MDIAIQHPWF…RTVLDSGISE (63 aa)) are required for complex formation with BFSP1 and BFSP2. At Gln6 the chain carries Deamidated glutamine; partial. Lys11 is a glycosylation site (N-linked (Glc) (glycation) lysine). Ser45 is subject to Phosphoserine. Deamidated glutamine; partial is present on Gln50. Residues 52–162 (LFRTVLDSGI…GHSERAIPVS (111 aa)) form the sHSP domain. Position 70 is an N6-acetyllysine (Lys70). Lys78 carries N-linked (Glc) (glycation) lysine glycosylation. Position 90 is a deamidated glutamine; partial (Gln90). Residue Lys99 is modified to N6-acetyllysine. His100 provides a ligand contact to Zn(2+). Deamidated asparagine; partial is present on Asn101. The Zn(2+) site is built by Glu102 and His107. Position 122 is a phosphoserine (Ser122). Deamidated asparagine; partial is present on Asn123. The segment at 144-173 (PKIPSGVDAGHSERAIPVSREEKPSSAPSS) is disordered. A compositionally biased stretch (basic and acidic residues) spans 153 to 167 (GHSERAIPVSREEKP). Zn(2+) is bound at residue His154. Residues 157–163 (RAIPVSR) form an important for oligomerization region. O-linked (GlcNAc) serine glycosylation occurs at Ser162.

It belongs to the small heat shock protein (HSP20) family. In terms of assembly, heteromer composed of three CRYAA and one CRYAB subunits. Inter-subunit bridging via zinc ions enhances stability, which is crucial as there is no protein turn over in the lens. Can also form homodimers and homotetramers (dimers of dimers) which serve as the building blocks of homooligomers. Within homooligomers, the zinc-binding motif is created from residues of 3 different molecules. His-100 and Glu-102 from one molecule are ligands of the zinc ion, and His-107 and His-154 residues from additional molecules complete the site with tetrahedral coordination geometry. Part of a complex required for lens intermediate filament formation composed of BFSP1, BFSP2 and CRYAA. Post-translationally, acetylation at Lys-70 may increase chaperone activity. In terms of processing, undergoes age-dependent proteolytical cleavage at the C-terminus.

It is found in the cytoplasm. The protein localises to the nucleus. Its function is as follows. Contributes to the transparency and refractive index of the lens. Acts as a chaperone, preventing aggregation of various proteins under a wide range of stress conditions. Required for the correct formation of lens intermediate filaments as part of a complex composed of BFSP1, BFSP2 and CRYAA. In Bos taurus (Bovine), this protein is Alpha-crystallin A chain (CRYAA).